The sequence spans 142 residues: Small ribosomal subunit protein bS6 (142 aa).

The tract at residues 96–142 (VTGQSEMLKAEENRSERRERRERPEHDGSADGDDSDSDSDNSDNADE) is disordered. Residues 103-124 (LKAEENRSERRERRERPEHDGS) are compositionally biased toward basic and acidic residues. The span at 125 to 142 (ADGDDSDSDSDNSDNADE) shows a compositional bias: acidic residues.

The protein belongs to the bacterial ribosomal protein bS6 family.

Binds together with bS18 to 16S ribosomal RNA. This Pseudomonas fluorescens (strain Pf0-1) protein is Small ribosomal subunit protein bS6.